Reading from the N-terminus, the 318-residue chain is NADH-quinone oxidoreductase subunit H 2 (318 aa).

9 helical membrane passes run 4-24 (LLIA…AGVF), 77-97 (LAPA…AFAP), 106-126 (VGVL…VLGA), 146-166 (LAYE…AGSF), 179-199 (LWFI…GLAA), 214-234 (LVAG…FLGE), 238-258 (ILLV…GPIL), 262-282 (VWFG…RAAL), and 293-313 (FAWK…AWIA).

The protein belongs to the complex I subunit 1 family. NDH-1 is composed of 14 different subunits. Subunits NuoA, H, J, K, L, M, N constitute the membrane sector of the complex.

It localises to the cell inner membrane. It carries out the reaction a quinone + NADH + 5 H(+)(in) = a quinol + NAD(+) + 4 H(+)(out). NDH-1 shuttles electrons from NADH, via FMN and iron-sulfur (Fe-S) centers, to quinones in the respiratory chain. The immediate electron acceptor for the enzyme in this species is believed to be ubiquinone. Couples the redox reaction to proton translocation (for every two electrons transferred, four hydrogen ions are translocated across the cytoplasmic membrane), and thus conserves the redox energy in a proton gradient. This subunit may bind ubiquinone. In Cereibacter sphaeroides (strain ATCC 17029 / ATH 2.4.9) (Rhodobacter sphaeroides), this protein is NADH-quinone oxidoreductase subunit H 2.